Reading from the N-terminus, the 146-residue chain is Lipoprotein signal peptidase (146 aa).

A run of 3 helical transmembrane segments spans residues 6–26 (IFLL…TLFL), 50–70 (MFAF…GGIL), and 82–104 (YAFP…FVHA). Active-site residues include D108 and D125. A helical membrane pass occupies residues 123–143 (FADVAIDLAVAWILIMVYFFP).

The protein belongs to the peptidase A8 family.

It localises to the cell inner membrane. It catalyses the reaction Release of signal peptides from bacterial membrane prolipoproteins. Hydrolyzes -Xaa-Yaa-Zaa-|-(S,diacylglyceryl)Cys-, in which Xaa is hydrophobic (preferably Leu), and Yaa (Ala or Ser) and Zaa (Gly or Ala) have small, neutral side chains.. Its pathway is protein modification; lipoprotein biosynthesis (signal peptide cleavage). This protein specifically catalyzes the removal of signal peptides from prolipoproteins. The polypeptide is Lipoprotein signal peptidase (Sulfurovum sp. (strain NBC37-1)).